The sequence spans 313 residues: Protoheme IX farnesyltransferase (313 aa).

The next 8 membrane-spanning stretches (helical) occupy residues 34–54, 56–76, 105–125, 128–148, 152–172, 173–193, 243–263, and 291–311; these read VIELLLVTTIPAMLLADRGTV, PLLILNTLVGGLLAAAGANTL, HALIFGLALSVLSFFWLWWTT, LSAHLAGATIAFYVLIYTLVL, TSQNVVWGGAAGCMPVMIGWS, AVTGTIQWPALVMFLIIFFWT, LALATGWLYAAVAIVAGTWFL, and YLAVVFCALAVDSALALPTLF.

The protein belongs to the UbiA prenyltransferase family. Protoheme IX farnesyltransferase subfamily.

Its subcellular location is the cell membrane. It carries out the reaction heme b + (2E,6E)-farnesyl diphosphate + H2O = Fe(II)-heme o + diphosphate. Its pathway is porphyrin-containing compound metabolism; heme O biosynthesis; heme O from protoheme: step 1/1. In terms of biological role, converts heme B (protoheme IX) to heme O by substitution of the vinyl group on carbon 2 of heme B porphyrin ring with a hydroxyethyl farnesyl side group. In Mycolicibacterium vanbaalenii (strain DSM 7251 / JCM 13017 / BCRC 16820 / KCTC 9966 / NRRL B-24157 / PYR-1) (Mycobacterium vanbaalenii), this protein is Protoheme IX farnesyltransferase.